The chain runs to 497 residues: Serine carboxypeptidase-like 20 (497 aa).

The signal sequence occupies residues 1-29 (MSIITMVWLMKVFVFVTLLSLVFVITESA). 3 disulfides stabilise this stretch: C90-C386, C254-C266, and C289-C353. N111 and N146 each carry an N-linked (GlcNAc...) asparagine glycan. S186 is a catalytic residue. N-linked (GlcNAc...) asparagine glycosylation occurs at N249. N405 is a glycosylation site (N-linked (GlcNAc...) asparagine). D421 is a catalytic residue. N463 carries N-linked (GlcNAc...) asparagine glycosylation. Residue H474 is part of the active site. A Microbody targeting signal motif is present at residues 495–497 (SKI).

Belongs to the peptidase S10 family. As to expression, ubiquitous.

It is found in the secreted. Its function is as follows. Probable carboxypeptidase. The sequence is that of Serine carboxypeptidase-like 20 (SCPL20) from Arabidopsis thaliana (Mouse-ear cress).